The sequence spans 424 residues: Chloroquine resistance transporter (424 aa).

Residues 1 to 58 are Cytoplasmic-facing; sequence MKFASKKNNQKNSSKNDERYRELDNLVQEGNGSRLGGGSCLGKCAHVFKLIFKEIKDN. Residues 59-79 traverse the membrane as a helical segment; sequence IFIYILSIIYLSVCVMNKIFA. Over 80–90 the chain is Vacuolar; that stretch reads KRTLNKIGNYS. N88 is a glycosylation site (N-linked (GlcNAc...) asparagine). The chain crosses the membrane as a helical span at residues 91–111; that stretch reads FVTSETHNFICMIMFFIVYSL. At 112 to 127 the chain is on the cytoplasmic side; sequence FGNKKGNSKERHRSFN. A helical transmembrane segment spans residues 128 to 148; the sequence is LQFFAISMLDACSVILAFIGL. Residues 149–154 lie on the Vacuolar side of the membrane; the sequence is TRTTGN. A helical transmembrane segment spans residues 155–175; it reads IQSFVLQLSIPINMFFCFLIL. The Cytoplasmic segment spans residues 176 to 178; sequence RYR. The helical transmembrane segment at 179 to 199 threads the bilayer; it reads YHLYNYLGAVIIVVTIALVEM. The Vacuolar segment spans residues 200–209; the sequence is KLSFETQEEN. Residues 210–230 form a helical membrane-spanning segment; that stretch reads SIIFNLVLISALIPVCFSNMT. Residues 231–248 lie on the Cytoplasmic side of the membrane; it reads REIVFKKYKIDILRLNAM. Residues 249 to 269 traverse the membrane as a helical segment; sequence VSFFQLFTSCLILPVYTLPFL. Residues 270–317 are Vacuolar-facing; that stretch reads KQLHLPYNEIWTNIKNGFACLFLGRNTVVENCGLGMAKLCDDCDGAWK. 2 cysteine pairs are disulfide-bonded: C289–C312 and C301–C309. The chain crosses the membrane as a helical span at residues 318-338; sequence TFALFSFFNICDNLITSYIID. The Cytoplasmic segment spans residues 339–346; it reads KFSTMTYT. A helical transmembrane segment spans residues 347 to 367; that stretch reads IVSCIQGPAIAIAYYFKFLAG. The Vacuolar segment spans residues 368–377; that stretch reads DVVREPRLLD. A helical transmembrane segment spans residues 378–398; it reads FVTLFGYLFGSIIYRVGNIIL. Topologically, residues 399 to 424 are cytoplasmic; that stretch reads ERKKMRNEENEDSEGELTNVDSIITQ.

It belongs to the CRT-like transporter family. As to quaternary structure, monomer.

It localises to the vacuole membrane. The catalysed reaction is L-arginine(in) = L-arginine(out). It catalyses the reaction L-lysine(in) = L-lysine(out). The enzyme catalyses L-histidine(out) = L-histidine(in). It carries out the reaction histamine(out) = histamine(in). The catalysed reaction is spermidine(in) = spermidine(out). It catalyses the reaction Fe(3+)(in) = Fe(3+)(out). The enzyme catalyses Fe(2+)(in) = Fe(2+)(out). With respect to regulation, transporter activity is trans-stimulated by host-derived peptides containing 4-11 amino acids. Trans-stimulation by hemoglobin-derived peptide VDPVNF is pH-dependent and sodium-independent. Saquinavir trans-stimulates transport of hemoglobin-derived peptide VDPVNF. Protons are non-competitive inhibitors of chloroquine transport. Nutrient transporter. Substrate transport is pH-dependent. Can transport arginine, lysine, histidine, peptides, histamine and spermidine. May modulate activity of endogenous transporters. Involved in maintaining the osmotic homeostasis of the digestive vacuole. Required for the asexual intraerythrocytic proliferation of parasites. Can transport Fe(2+) and Fe(3+). The protein is Chloroquine resistance transporter of Plasmodium falciparum.